A 614-amino-acid chain; its full sequence is DBH-like monooxygenase protein 1 homolog (614 aa).

Residues 1-22 form the signal peptide; sequence MSENKLFCAIVFLTSLFCSTCS. Residues 23 to 593 are Lumenal-facing; that stretch reads QGTRFVHSAA…CRKDSAIQCE (571 aa). One can recognise a DOMON domain in the interval 37–150; that stretch reads RRYNIKWGFD…STVRVIWAFH (114 aa). Asn-116 is a glycosylation site (N-linked (GlcNAc...) asparagine). The active site involves Tyr-205. Intrachain disulfides connect Cys-207–Cys-259 and Cys-244–Cys-271. His-237 and His-238 together coordinate Cu cation. Asn-249 carries an N-linked (GlcNAc...) asparagine glycan. 3 residues coordinate Cu cation: His-309, His-391, and His-393. Intrachain disulfides connect Cys-366-Cys-482, Cys-370-Cys-552, and Cys-445-Cys-467. Residue His-391 is part of the active site. An N-linked (GlcNAc...) asparagine glycan is attached at Asn-454. Met-466 contributes to the Cu cation binding site. Asn-519 is a glycosylation site (N-linked (GlcNAc...) asparagine). The chain crosses the membrane as a helical span at residues 594-612; it reads HSLALLLTACLLLILQTCL.

Belongs to the copper type II ascorbate-dependent monooxygenase family. Requires Cu(2+) as cofactor.

Its subcellular location is the endoplasmic reticulum membrane. The sequence is that of DBH-like monooxygenase protein 1 homolog (moxd1) from Danio rerio (Zebrafish).